Here is a 366-residue protein sequence, read N- to C-terminus: Aminomethyltransferase (366 aa).

This sequence belongs to the GcvT family. The glycine cleavage system is composed of four proteins: P, T, L and H.

The enzyme catalyses N(6)-[(R)-S(8)-aminomethyldihydrolipoyl]-L-lysyl-[protein] + (6S)-5,6,7,8-tetrahydrofolate = N(6)-[(R)-dihydrolipoyl]-L-lysyl-[protein] + (6R)-5,10-methylene-5,6,7,8-tetrahydrofolate + NH4(+). In terms of biological role, the glycine cleavage system catalyzes the degradation of glycine. The chain is Aminomethyltransferase from Bordetella bronchiseptica (strain ATCC BAA-588 / NCTC 13252 / RB50) (Alcaligenes bronchisepticus).